The sequence spans 186 residues: Casparian strip membrane protein 3 (186 aa).

At 1 to 26 (MKAGALELGEGSKTSIPRGGVNRGIS) the chain is on the cytoplasmic side. The chain crosses the membrane as a helical span at residues 27–47 (ILDFILRLITIIGTLGSAIAM). The Extracellular portion of the chain corresponds to 48 to 74 (GTTNETLPFFTQFTQFRAEYDDLPTFT). The N-linked (GlcNAc...) asparagine glycan is linked to Asn51. Residues 75–95 (FFVIANSIVSGYLVLSLPMSI) traverse the membrane as a helical segment. The Cytoplasmic segment spans residues 96-107 (LHIVRSGARASR). Residues 108-128 (IVLIFFDTAMLALLTAAASAA) traverse the membrane as a helical segment. The Extracellular segment spans residues 129-161 (SAIVYLAHKGNAQANWFAICQQFKSFCERISGS). Residues 162–182 (LIGSFGGIILFILLVLLSAVA) form a helical membrane-spanning segment. Topologically, residues 183–186 (LSRC) are cytoplasmic.

Belongs to the Casparian strip membrane proteins (CASP) family. Homodimer and heterodimers.

The protein resides in the cell membrane. Functionally, regulates membrane-cell wall junctions and localized cell wall deposition. Required for establishment of the Casparian strip membrane domain (CSD) and the subsequent formation of Casparian strips, a cell wall modification of the root endodermis that determines an apoplastic barrier between the intraorganismal apoplasm and the extraorganismal apoplasm and prevents lateral diffusion. This chain is Casparian strip membrane protein 3, found in Vitis vinifera (Grape).